The chain runs to 386 residues: 5-hydroxytryptamine receptor 1B (386 aa).

The segment at 1–25 is disordered; sequence MEEPGARCAPPPPAGSQTQTPSSNL. At 1–42 the chain is on the extracellular side; it reads MEEPGARCAPPPPAGSQTQTPSSNLSHNCSADSYIYQDSIAL. Polar residues predominate over residues 16-25; it reads SQTQTPSSNL. N-linked (GlcNAc...) asparagine glycosylation is found at Asn24 and Asn28. The chain crosses the membrane as a helical span at residues 43–68; the sequence is PWKVLLVALLALITLATTLSNAFVIA. At 69–82 the chain is on the cytoplasmic side; it reads TVYRTRKLHTPANY. The chain crosses the membrane as a helical span at residues 83–107; the sequence is LIASLAVTDLLVSILVMPISTMYTV. Residues 108–115 lie on the Extracellular side of the membrane; that stretch reads TGRWTLGQ. The helical transmembrane segment at 116–141 threads the bilayer; the sequence is VVCDFWLSSDITCCTASIMHLCVIAL. A disulfide bridge connects residues Cys118 and Cys195. The ergotamine site is built by Asp125 and Thr130. The DRY motif; important for ligand-induced conformation changes and signaling signature appears at 142 to 144; it reads DRY. At 142 to 161 the chain is on the cytoplasmic side; the sequence is DRYWAITDAVEYSAKRTPRR. A helical membrane pass occupies residues 162-180; it reads AAVMIALVWVFSISISLPR. At 181 to 201 the chain is on the extracellular side; the sequence is FFWRQAKAEEEVLDCLVNTDH. Residue Val197 coordinates ergotamine. The chain crosses the membrane as a helical span at residues 202–225; that stretch reads VLYTVYSTVGAFYLPTLLLIALYG. At 226-311 the chain is on the cytoplasmic side; that stretch reads RIYVEARSRI…AARERKATKT (86 aa). The disordered stretch occupies residues 253–272; the sequence is ISDSPGSTSSVTSINSRVPD. Over residues 254–268 the composition is skewed to low complexity; that stretch reads SDSPGSTSSVTSINS. Residues 312–333 form a helical membrane-spanning segment; the sequence is LGIILGAFIVCWLPFFIISLVM. Over 334–343 the chain is Extracellular; the sequence is PICKDACWFH. The helical transmembrane segment at 344–366 threads the bilayer; that stretch reads MAIFDFFNWLGYLNSLINPIIYT. Positions 361-365 match the NPxxY motif; important for ligand-induced conformation changes and signaling motif; sequence NPIIY. Topologically, residues 367–386 are cytoplasmic; sequence MPNEDFKQAFHKLIRFKCTG. Cys384 is lipidated: S-palmitoyl cysteine.

The protein belongs to the G-protein coupled receptor 1 family. As to quaternary structure, homodimer. Heterodimer with HTR1D. Post-translationally, phosphorylated. Desensitization of the receptor may be mediated by its phosphorylation. Palmitoylated.

The protein resides in the cell membrane. G-protein coupled receptor for 5-hydroxytryptamine (serotonin). Also functions as a receptor for ergot alkaloid derivatives, various anxiolytic and antidepressant drugs and other psychoactive substances, such as lysergic acid diethylamide (LSD). Ligand binding causes a conformation change that triggers signaling via guanine nucleotide-binding proteins (G proteins) and modulates the activity of downstream effectors, such as adenylate cyclase. HTR1B is coupled to G(i)/G(o) G alpha proteins and mediates inhibitory neurotransmission by inhibiting adenylate cyclase activity. Arrestin family members inhibit signaling via G proteins and mediate activation of alternative signaling pathways. Regulates the release of 5-hydroxytryptamine, dopamine and acetylcholine in the brain, and thereby affects neural activity, nociceptive processing, pain perception, mood and behavior. Besides, plays a role in vasoconstriction of cerebral arteries. The protein is 5-hydroxytryptamine receptor 1B (HTR1B) of Spalax ehrenbergi (Middle East blind mole rat).